We begin with the raw amino-acid sequence, 64 residues long: Short neurotoxin 1 (64 aa).

4 disulfides stabilise this stretch: Cys3-Cys26, Cys20-Cys43, Cys45-Cys56, and Cys57-Cys62.

This sequence belongs to the three-finger toxin family. Short-chain subfamily. Type I alpha-neurotoxin sub-subfamily. As to expression, expressed by the venom gland.

The protein localises to the secreted. Functionally, binds to muscle nicotinic acetylcholine receptor (nAChR) and inhibit acetylcholine from binding to the receptor, thereby impairing neuromuscular transmission. This is Short neurotoxin 1 from Bungarus fasciatus (Banded krait).